The sequence spans 281 residues: Probable catechol O-methyltransferase 2 (281 aa).

S-adenosyl-L-methionine is bound by residues isoleucine 78, glutamate 100, serine 108, glutamate 127, valine 128, alanine 156, and aspartate 183. Aspartate 183 contacts Mg(2+). Lysine 186 contacts substrate. Residues aspartate 211 and asparagine 212 each coordinate Mg(2+). Residue asparagine 212 coordinates substrate.

The protein belongs to the class I-like SAM-binding methyltransferase superfamily. Cation-dependent O-methyltransferase family. It depends on Mg(2+) as a cofactor.

It is found in the vacuole. The catalysed reaction is a catechol + S-adenosyl-L-methionine = a guaiacol + S-adenosyl-L-homocysteine + H(+). This chain is Probable catechol O-methyltransferase 2, found in Schizosaccharomyces pombe (strain 972 / ATCC 24843) (Fission yeast).